We begin with the raw amino-acid sequence, 552 residues long: Asparagine--tRNA ligase, cytoplasmic (552 aa).

The tract at residues 1 to 23 is disordered; that stretch reads MSQVYVNEKTGADSTDVSGSEQQ. Residues 12–23 show a composition bias toward polar residues; the sequence is ADSTDVSGSEQQ.

The protein belongs to the class-II aminoacyl-tRNA synthetase family.

The protein localises to the cytoplasm. It carries out the reaction tRNA(Asn) + L-asparagine + ATP = L-asparaginyl-tRNA(Asn) + AMP + diphosphate + H(+). The sequence is that of Asparagine--tRNA ligase, cytoplasmic (DED81) from Debaryomyces hansenii (strain ATCC 36239 / CBS 767 / BCRC 21394 / JCM 1990 / NBRC 0083 / IGC 2968) (Yeast).